Here is a 364-residue protein sequence, read N- to C-terminus: Mannose-1-phosphate guanyltransferase (364 aa).

This sequence belongs to the transferase hexapeptide repeat family.

It is found in the cytoplasm. The enzyme catalyses alpha-D-mannose 1-phosphate + GTP + H(+) = GDP-alpha-D-mannose + diphosphate. The protein operates within nucleotide-sugar biosynthesis; GDP-alpha-D-mannose biosynthesis; GDP-alpha-D-mannose from alpha-D-mannose 1-phosphate (GTP route): step 1/1. Its function is as follows. Involved in cell wall synthesis where it is required for glycosylation. Involved in cell cycle progression through cell-size checkpoint. The chain is Mannose-1-phosphate guanyltransferase (mpg1) from Aspergillus oryzae (strain ATCC 42149 / RIB 40) (Yellow koji mold).